Consider the following 279-residue polypeptide: UPF0173 metal-dependent hydrolase MXAN_1394 (279 aa).

This sequence belongs to the UPF0173 family.

This Myxococcus xanthus (strain DK1622) protein is UPF0173 metal-dependent hydrolase MXAN_1394.